A 255-amino-acid polypeptide reads, in one-letter code: Hydroxyacylglutathione hydrolase (255 aa).

Positions 56, 58, 60, 61, 112, 129, and 167 each coordinate Zn(2+).

The protein belongs to the metallo-beta-lactamase superfamily. Glyoxalase II family. In terms of assembly, monomer. The cofactor is Zn(2+).

The catalysed reaction is an S-(2-hydroxyacyl)glutathione + H2O = a 2-hydroxy carboxylate + glutathione + H(+). The protein operates within secondary metabolite metabolism; methylglyoxal degradation; (R)-lactate from methylglyoxal: step 2/2. Its function is as follows. Thiolesterase that catalyzes the hydrolysis of S-D-lactoyl-glutathione to form glutathione and D-lactic acid. The protein is Hydroxyacylglutathione hydrolase of Pseudomonas fluorescens (strain SBW25).